A 1218-amino-acid chain; its full sequence is Probable cation-transporting ATPase 13A5 (1218 aa).

4 helical membrane passes run 33–53 (KAFC…VFYW), 222–242 (GYIE…VLSV), 401–421 (FIVF…GVYM), and 433–453 (MALI…LTIG). The active-site 4-aspartylphosphate intermediate is D486. N540, N669, and N819 each carry an N-linked (GlcNAc...) asparagine glycan. D850 and D854 together coordinate Mg(2+). The next 6 helical transmembrane spans lie at 903–923 (FGVF…ALLL), 940–956 (VAIT…THAY), 973–993 (LLLS…SAFL), 1042–1062 (FETT…AFIF), 1077–1097 (IFSF…FSDF), and 1115–1135 (VLIL…EDSI).

Belongs to the cation transport ATPase (P-type) (TC 3.A.3) family. Type V subfamily.

The protein resides in the membrane. It catalyses the reaction ATP + H2O = ADP + phosphate + H(+). This Homo sapiens (Human) protein is Probable cation-transporting ATPase 13A5 (ATP13A5).